The chain runs to 536 residues: Prolyl 3-hydroxylase sudestada1 (536 aa).

The segment at 1–35 is disordered; it reads METSSSSPVKPRRKDKDEDGRAEQEDSADQVGEPH. Positions 14–24 are enriched in basic and acidic residues; sequence KDKDEDGRAEQ. Residues 165–275 enclose the Fe2OG dioxygenase domain; sequence KLDYVSASCS…RLTINGWFHG (111 aa). Residues H185 and D187 each contribute to the Fe cation site. 2-oxoglutarate is bound at residue Y199. H254 serves as a coordination point for Fe cation. R266 lines the 2-oxoglutarate pocket. The tract at residues 467–486 is disordered; that stretch reads PTAKAPTDGRRSDYDDEEED.

Belongs to the TPA1 family. As to quaternary structure, monomer. Fe(2+) serves as cofactor. L-ascorbate is required as a cofactor. As to expression, in third-instar larval tissues,highly expressed in the fat body, with significant expression in other organs including the brain, salivary glands, imaginal disks and gut.

The protein resides in the nucleus. The protein localises to the cytoplasm. It catalyses the reaction [ribosomal protein uS12]-L-proline + 2-oxoglutarate + O2 = [ribosomal protein uS12]-(3S)-3-hydroxy-L-proline + succinate + CO2. Prolyl 3-hydroxylase that catalyzes 3-hydroxylation of 'Pro-62' of small ribosomal subunit uS12 (RpS23), thereby regulating protein translation termination efficiency. This is Prolyl 3-hydroxylase sudestada1 (sud1) from Drosophila melanogaster (Fruit fly).